The primary structure comprises 476 residues: Bifunctional protein GlmU (476 aa).

Positions 1 to 235 (MTALDIIIMA…ALQVAGVNSP (235 aa)) are pyrophosphorylase. UDP-N-acetyl-alpha-D-glucosamine-binding positions include Lys-23, Gln-81, 86 to 87 (GT), 108 to 110 (SGD), Gly-145, Glu-160, and Asn-233. Mg(2+) is bound at residue Asp-110. Mg(2+) is bound at residue Asn-233. Positions 236–256 (AQLADLERAHQRAQAAALMEQ) are linker. Residues 257–476 (GVRLADPARF…WKRPAKQAKG (220 aa)) are N-acetyltransferase. Residues Arg-351 and Lys-369 each coordinate UDP-N-acetyl-alpha-D-glucosamine. The Proton acceptor role is filled by His-381. 2 residues coordinate UDP-N-acetyl-alpha-D-glucosamine: Tyr-384 and Asn-395. Acetyl-CoA-binding positions include Ala-398, 404-405 (NY), Ser-423, Gly-441, and Arg-458.

It in the N-terminal section; belongs to the N-acetylglucosamine-1-phosphate uridyltransferase family. In the C-terminal section; belongs to the transferase hexapeptide repeat family. In terms of assembly, homotrimer. Mg(2+) is required as a cofactor.

The protein localises to the cytoplasm. It catalyses the reaction alpha-D-glucosamine 1-phosphate + acetyl-CoA = N-acetyl-alpha-D-glucosamine 1-phosphate + CoA + H(+). It carries out the reaction N-acetyl-alpha-D-glucosamine 1-phosphate + UTP + H(+) = UDP-N-acetyl-alpha-D-glucosamine + diphosphate. The protein operates within nucleotide-sugar biosynthesis; UDP-N-acetyl-alpha-D-glucosamine biosynthesis; N-acetyl-alpha-D-glucosamine 1-phosphate from alpha-D-glucosamine 6-phosphate (route II): step 2/2. Its pathway is nucleotide-sugar biosynthesis; UDP-N-acetyl-alpha-D-glucosamine biosynthesis; UDP-N-acetyl-alpha-D-glucosamine from N-acetyl-alpha-D-glucosamine 1-phosphate: step 1/1. It participates in bacterial outer membrane biogenesis; LPS lipid A biosynthesis. In terms of biological role, catalyzes the last two sequential reactions in the de novo biosynthetic pathway for UDP-N-acetylglucosamine (UDP-GlcNAc). The C-terminal domain catalyzes the transfer of acetyl group from acetyl coenzyme A to glucosamine-1-phosphate (GlcN-1-P) to produce N-acetylglucosamine-1-phosphate (GlcNAc-1-P), which is converted into UDP-GlcNAc by the transfer of uridine 5-monophosphate (from uridine 5-triphosphate), a reaction catalyzed by the N-terminal domain. The sequence is that of Bifunctional protein GlmU from Acidovorax sp. (strain JS42).